A 237-amino-acid polypeptide reads, in one-letter code: Lectin alpha chain (237 aa).

Positions 8 and 10 each coordinate Mn(2+). Positions 10, 12, 14, and 19 each coordinate Ca(2+). Tyr12 serves as a coordination point for a carbohydrate. 3 residues coordinate Mn(2+): Asp19, His24, and Ser34. Position 99–100 (99–100 (LY)) interacts with a carbohydrate. Position 208 (Asp208) interacts with Ca(2+). Arg228 serves as a coordination point for a carbohydrate.

The protein belongs to the leguminous lectin family. Homotetramer. Post-translationally, the beta and gamma chains are produced by partial proteolytic processing of the lectin alpha chain by an asparaginyl endopeptidase. Mixture of 60% alpha lectin and 40% of its beta and gamma proteolytic fragments.

Its function is as follows. D-mannose/D-glucose-binding lectin. Has anti-inflammatory activity in rats. Induces histamine release in mast cells from rat. Induces lymphocyte proliferation and IFNG production. Shows toxicity against the aquatic snail B.glabrata at concentrations higher than 50 ug/ml. The chain is Lectin alpha chain from Dioclea grandiflora (Mucana).